The chain runs to 807 residues: Probable E3 ubiquitin-protein ligase mug30 (807 aa).

The HECT domain occupies 453–807; that stretch reads RNKDFRKALK…LLETNGFNIR (355 aa). The active-site Glycyl thioester intermediate is the Cys775.

The protein resides in the cytoplasm. It localises to the cytoskeleton. It is found in the microtubule organizing center. The protein localises to the spindle pole body. It carries out the reaction S-ubiquitinyl-[E2 ubiquitin-conjugating enzyme]-L-cysteine + [acceptor protein]-L-lysine = [E2 ubiquitin-conjugating enzyme]-L-cysteine + N(6)-ubiquitinyl-[acceptor protein]-L-lysine.. The protein operates within protein modification; protein ubiquitination. Functionally, probable E3 ubiquitin-protein ligase. Has a role in meiosis. The sequence is that of Probable E3 ubiquitin-protein ligase mug30 (mug30) from Schizosaccharomyces pombe (strain 972 / ATCC 24843) (Fission yeast).